A 322-amino-acid chain; its full sequence is Serine/threonine-protein phosphatase PP1-2 (322 aa).

Residues D60, H62, D88, and N120 each contribute to the Mn(2+) site. H121 (proton donor) is an active-site residue. H169 and H244 together coordinate Mn(2+). The interval 298–322 (RQRVSQSSIKESKSATNSLKKSKNN) is disordered. Residues 301 to 316 (VSQSSIKESKSATNSL) show a composition bias toward polar residues.

The protein belongs to the PPP phosphatase family. PP-1 subfamily. The cofactor is Mn(2+).

It carries out the reaction O-phospho-L-seryl-[protein] + H2O = L-seryl-[protein] + phosphate. The enzyme catalyses O-phospho-L-threonyl-[protein] + H2O = L-threonyl-[protein] + phosphate. Functionally, essential role in cell cycle control. PP1 is perhaps required for exit from mitosis. The chain is Serine/threonine-protein phosphatase PP1-2 (sds21) from Schizosaccharomyces pombe (strain 972 / ATCC 24843) (Fission yeast).